A 175-amino-acid polypeptide reads, in one-letter code: Regenerating islet-derived protein 3-beta (175 aa).

Positions 1 to 26 are cleaved as a signal peptide; it reads MLHRLAFPVMSWMLLSCLMLLSQVQG. Residues 27–37 constitute a propeptide that is removed on maturation; that stretch reads EDSPKKIPSAR. 3 cysteine pairs are disulfide-bonded: Cys40–Cys51, Cys68–Cys171, and Cys146–Cys163. Residues 47–172 form the C-type lectin domain; it reads YGSYCYALFQ…CEVKLPYVCK (126 aa). His107 serves as a coordination point for Zn(2+). Residues 114–116 carry the EPN motif; the sequence is EPN. Glu121 is a Zn(2+) binding site.

As to quaternary structure, forms a hexameric membrane-permeabilizing oligomeric pore on membrane phospholipids. The hexamer is formed by three dimers related by helical symmetry. Forms filaments, filamentation traps pore complexes and limits damage to host cells. Interacts with EXTL3. In terms of processing, proteolytic processing by trypsin removes an inhibitory N-terminal propeptide and is essential for peptidoglycan binding and antibacterial activity. As to expression, constitutively expressed in intestine.

The protein resides in the secreted. Its activity is regulated as follows. Lipopolysaccharide inhibits pore-forming activity, explaining why is bactericidal for Gram-positive but not Gram-negative bacteria. Functionally, bactericidal C-type lectin which acts against several intestinal Gram-positive bacteria and Gram-negative bacteria. Lacks antibacterial activity against S.typhimurium. May play a role in protection against infection with S.enteritidis by inhibiting its translocation from the gut lumen into intestinal tissues and further extraintestinal tissues. In terms of biological role, acts as a hormone in response to different stimuli. Secreted by different cell types to activate its receptor EXTL3 and induce cell specific signaling pathways. In pancreas, is able stimulate cell proliferation. The chain is Regenerating islet-derived protein 3-beta from Rattus norvegicus (Rat).